Reading from the N-terminus, the 352-residue chain is Protein RecA (352 aa).

65 to 72 (GPESSGKT) is a binding site for ATP.

It belongs to the RecA family.

Its subcellular location is the cytoplasm. Can catalyze the hydrolysis of ATP in the presence of single-stranded DNA, the ATP-dependent uptake of single-stranded DNA by duplex DNA, and the ATP-dependent hybridization of homologous single-stranded DNAs. It interacts with LexA causing its activation and leading to its autocatalytic cleavage. This chain is Protein RecA, found in Pseudomonas fluorescens (strain Pf0-1).